The sequence spans 464 residues: Kynureninase 2 (464 aa).

Residues L135, T136, 163–166 (FPSD), D248, H251, and Y273 contribute to the pyridoxal 5'-phosphate site. K274 bears the N6-(pyridoxal phosphate)lysine mark. Pyridoxal 5'-phosphate contacts are provided by W313 and N341.

Belongs to the kynureninase family. Homodimer. Requires pyridoxal 5'-phosphate as cofactor.

It localises to the cytoplasm. It carries out the reaction L-kynurenine + H2O = anthranilate + L-alanine + H(+). The enzyme catalyses 3-hydroxy-L-kynurenine + H2O = 3-hydroxyanthranilate + L-alanine + H(+). Its pathway is amino-acid degradation; L-kynurenine degradation; L-alanine and anthranilate from L-kynurenine: step 1/1. The protein operates within cofactor biosynthesis; NAD(+) biosynthesis; quinolinate from L-kynurenine: step 2/3. In terms of biological role, catalyzes the cleavage of L-kynurenine (L-Kyn) and L-3-hydroxykynurenine (L-3OHKyn) into anthranilic acid (AA) and 3-hydroxyanthranilic acid (3-OHAA), respectively. The polypeptide is Kynureninase 2 (bna5-2) (Aspergillus fumigatus (strain CBS 144.89 / FGSC A1163 / CEA10) (Neosartorya fumigata)).